The sequence spans 97 residues: Small ribosomal subunit protein uS19 (97 aa).

Belongs to the universal ribosomal protein uS19 family.

Protein S19 forms a complex with S13 that binds strongly to the 16S ribosomal RNA. The protein is Small ribosomal subunit protein uS19 of Salinibacter ruber (strain DSM 13855 / M31).